A 619-amino-acid polypeptide reads, in one-letter code: Dynein axonemal intermediate chain 2 (619 aa).

WD repeat units lie at residues 214–254, 261–302, 362–401, 405–445, and 450–489; these read KPSS…LVAE, SHRD…EPTE, GHHG…SSIM, YHMA…CDPA, and VCDD…STLQ. A disordered region spans residues 566–619; sequence EALKKKPKPKKASIEVEGEDELEDIAGEEEESGIIMGEDTGEDDMDEKNEGGAP. A compositionally biased stretch (acidic residues) spans 581–597; that stretch reads VEGEDELEDIAGEEEES.

It belongs to the dynein intermediate chain family. In terms of assembly, consists of at least two heavy chains and a number of intermediate and light chains. Interacts with DNAAF2. Interacts with DNAAF6/PIH1D3. Interacts with HEATR2; probably involved in outer arm dynein assembly. Interacts with CFAP53.

It is found in the cytoplasm. The protein resides in the cytoskeleton. The protein localises to the cilium axoneme. Its subcellular location is the dynein axonemal particle. Functionally, part of the dynein complex of respiratory cilia. The protein is Dynein axonemal intermediate chain 2 (Dnai2) of Rattus norvegicus (Rat).